We begin with the raw amino-acid sequence, 182 residues long: Adenylate kinase (182 aa).

12 to 17 (GAGKGT) lines the ATP pocket. The interval 32–61 (STGELLRKEIEMNTALGIQVKDIMNRGELV) is NMP. AMP contacts are provided by residues Thr33, Arg38, 59–61 (ELV), 85–88 (GYPR), and Gln92. The tract at residues 126-132 (LRGRKDD) is LID. Arg127 serves as a coordination point for ATP. Residues Arg129 and Arg140 each contribute to the AMP site. Arg168 lines the ATP pocket.

The protein belongs to the adenylate kinase family. In terms of assembly, monomer.

It localises to the cytoplasm. It catalyses the reaction AMP + ATP = 2 ADP. It functions in the pathway purine metabolism; AMP biosynthesis via salvage pathway; AMP from ADP: step 1/1. Functionally, catalyzes the reversible transfer of the terminal phosphate group between ATP and AMP. Plays an important role in cellular energy homeostasis and in adenine nucleotide metabolism. The protein is Adenylate kinase of Prochlorococcus marinus (strain MIT 9301).